The primary structure comprises 454 residues: uncharacterized protein (454 aa).

Positions 364–405 (CSRPGCDAPAYHSEVHHVTPWTTTHRTDINDLTLACGPDNRL) constitute an HNH domain.

It belongs to the Rv1128c/1148c/1588c/1702c/1945/3466 family.

This is an uncharacterized protein from Mycobacterium tuberculosis (strain ATCC 25618 / H37Rv).